The sequence spans 309 residues: MTDLTRVVTEIAEEMRARPDRGEVATYIPELARMDPRAFGMVVIDADGEVAAAGDCDVPFSIQSISKVFTLTLALGMVGDRLWRRVGREPSGSPFNSIVQLEYERGIPRNPFINAGAIAVTDVILSRHQPREALGEILRFLQFLAGDAAIAIDESVAASEQRTGYRNMALANFMKAHGVLDNPVPYLLGVYFHHCAIAMTCRQLAEAGRFLAHSGRHPATGHLVVQPERARRINAVMLTCGHYDGSGEFAYRVGLPGKSGVGGGILAIAPGRASIAVWSPGLDAAGNSHLGRIALEMLTKRLGWSIFGQ.

7 residues coordinate substrate: serine 64, asparagine 114, glutamate 160, asparagine 167, tyrosine 191, tyrosine 243, and valine 261.

This sequence belongs to the glutaminase family. Homotetramer.

It carries out the reaction L-glutamine + H2O = L-glutamate + NH4(+). This is Glutaminase from Methylobacterium sp. (strain 4-46).